Consider the following 348-residue polypeptide: Selenide, water dikinase (348 aa).

Residue Cys-17 is part of the active site. ATP-binding positions include Lys-20 and 48–50 (TRD). Mg(2+) is bound at residue Asp-51. ATP-binding positions include Asp-68, Asp-91, and 139-141 (GHS). Asp-91 contributes to the Mg(2+) binding site. Asp-227 lines the Mg(2+) pocket.

This sequence belongs to the selenophosphate synthase 1 family. Class I subfamily. In terms of assembly, homodimer. Requires Mg(2+) as cofactor.

It catalyses the reaction hydrogenselenide + ATP + H2O = selenophosphate + AMP + phosphate + 2 H(+). In terms of biological role, synthesizes selenophosphate from selenide and ATP. The protein is Selenide, water dikinase of Yersinia pestis.